An 86-amino-acid chain; its full sequence is Latartoxin-1b (86 aa).

An N-terminal signal peptide occupies residues 1-19; it reads MKILVLAVVCTVLLQVALS. Residues 20 to 26 constitute a propeptide, removed in mature form; the sequence is ADSEEVR. A Processing quadruplet motif motif is present at residues 23-26; the sequence is EEVR. Intrachain disulfides connect Cys-28/Cys-43, Cys-35/Cys-48, Cys-42/Cys-65, and Cys-50/Cys-63.

Belongs to the neurotoxin 19 (CSTX) family. Contains 4 disulfide bonds. In terms of processing, cleavage of the propeptide depends on the processing quadruplet motif (XXXR, with at least one of X being E). As to expression, expressed by the venom gland.

It is found in the secreted. Functionally, insect toxin. The polypeptide is Latartoxin-1b (Lachesana tarabaevi (Spider)).